Consider the following 314-residue polypeptide: Homeobox protein DBX1-A (314 aa).

The segment at residues 175-234 is a DNA-binding region (homeobox); the sequence is GMLRRAVFSDVQRKALEKMFQKQKYISKPDRKKLAAKLGLKDSQVKIWFQNRRMKWRNSK. Disordered stretches follow at residues 234–279 and 292–314; these read KERE…CAPS and STDS…ITVS. A compositionally biased stretch (basic and acidic residues) spans 258–267; the sequence is DLSDVGKKSS. Over residues 305 to 314 the composition is skewed to acidic residues; that stretch reads SESEDEITVS.

The protein belongs to the H2.0 homeobox family.

Its subcellular location is the nucleus. The protein is Homeobox protein DBX1-A (dbx1a) of Danio rerio (Zebrafish).